Here is a 270-residue protein sequence, read N- to C-terminus: Glucosamine-6-phosphate deaminase (270 aa).

D68 serves as the catalytic Proton acceptor; for enolization step. D145 (for ring-opening step) is an active-site residue. H147 serves as the catalytic Proton acceptor; for ring-opening step. E152 functions as the For ring-opening step in the catalytic mechanism.

This sequence belongs to the glucosamine/galactosamine-6-phosphate isomerase family. NagB subfamily.

The catalysed reaction is alpha-D-glucosamine 6-phosphate + H2O = beta-D-fructose 6-phosphate + NH4(+). It participates in amino-sugar metabolism; N-acetylneuraminate degradation; D-fructose 6-phosphate from N-acetylneuraminate: step 5/5. Catalyzes the reversible isomerization-deamination of glucosamine 6-phosphate (GlcN6P) to form fructose 6-phosphate (Fru6P) and ammonium ion. This chain is Glucosamine-6-phosphate deaminase, found in Bifidobacterium longum subsp. infantis (strain ATCC 15697 / DSM 20088 / JCM 1222 / NCTC 11817 / S12).